Here is a 358-residue protein sequence, read N- to C-terminus: Peptide chain release factor 1 (358 aa).

Residue Gln-233 is modified to N5-methylglutamine.

Belongs to the prokaryotic/mitochondrial release factor family. Methylated by PrmC. Methylation increases the termination efficiency of RF1.

Its subcellular location is the cytoplasm. Its function is as follows. Peptide chain release factor 1 directs the termination of translation in response to the peptide chain termination codons UAG and UAA. This chain is Peptide chain release factor 1, found in Flavobacterium johnsoniae (strain ATCC 17061 / DSM 2064 / JCM 8514 / BCRC 14874 / CCUG 350202 / NBRC 14942 / NCIMB 11054 / UW101) (Cytophaga johnsonae).